Reading from the N-terminus, the 406-residue chain is Cytochrome bc1 complex Rieske iron-sulfur subunit (406 aa).

3 helical membrane-spanning segments follow: residues 56 to 76 (VGIW…VYLF), 98 to 118 (LLGL…IFYI), and 166 to 186 (MLGI…GGMV). The region spanning 291-388 (HGPRNAVMLI…ITVDEEGYLV (98 aa)) is the Rieske domain. [2Fe-2S] cluster-binding residues include Cys-331, His-333, Cys-350, and His-353. Cys-336 and Cys-352 are oxidised to a cystine.

The protein belongs to the Rieske iron-sulfur protein family. In terms of assembly, the cytochrome bc1 complex is composed of a cytochrome b (QcrB), the Rieske iron-sulfur protein (QcrA) and a diheme cytochrome c (QcrC) subunit. The bc1 complex forms a supercomplex with cytochrome c oxidase (cytochrome aa3). It depends on [2Fe-2S] cluster as a cofactor.

The protein resides in the cell membrane. Its function is as follows. Iron-sulfur subunit of the cytochrome bc1 complex, an essential component of the respiratory electron transport chain required for ATP synthesis. The bc1 complex catalyzes the oxidation of menaquinol and the reduction of cytochrome c in the respiratory chain. The bc1 complex operates through a Q-cycle mechanism that couples electron transfer to generation of the proton gradient that drives ATP synthesis. The chain is Cytochrome bc1 complex Rieske iron-sulfur subunit (qcrA) from Corynebacterium diphtheriae (strain ATCC 700971 / NCTC 13129 / Biotype gravis).